Reading from the N-terminus, the 243-residue chain is Membrane protein US21 (243 aa).

7 helical membrane-spanning segments follow: residues 20-40 (ILIW…WLVL), 47-67 (LFSS…CLGL), 80-100 (WILL…GFHF), 106-126 (IYAM…TYLF), 143-163 (LILL…EILV), 164-184 (MIAG…DILH), and 192-212 (IPGA…VLYF).

The protein belongs to the cytomegalovirus US12 family.

The protein localises to the host membrane. The chain is Membrane protein US21 (US21) from Human cytomegalovirus (strain Merlin) (HHV-5).